The chain runs to 429 residues: 4-hydroxybutyrate coenzyme A transferase (429 aa).

215–219 contacts CoA; that stretch reads GIGAI. Glu238 functions as the 5-glutamyl coenzyme A thioester intermediate in the catalytic mechanism. Gly336 lines the CoA pocket.

It belongs to the acetyl-CoA hydrolase/transferase family.

The protein is 4-hydroxybutyrate coenzyme A transferase (cat2) of Clostridium kluyveri (strain ATCC 8527 / DSM 555 / NBRC 12016 / NCIMB 10680 / K1).